The following is a 165-amino-acid chain: Anaerobic nitrite reductase GLB1 (165 aa).

The region spanning 12–162 is the Globin domain; the sequence is VFGEEQEALV…LVAAIKREMK (151 aa). The Homodimerization signature appears at 45–49; the sequence is EIAPS. Residues Ser-55, Lys-69, His-73, Arg-103, Thr-107, and His-108 each coordinate heme b. A Homodimerization motif is present at residues 115-127; it reads DGHFEVTGFALLE.

This sequence belongs to the plant globin family. In terms of assembly, homodimer. Heme b is required as a cofactor. In terms of tissue distribution, in vegetative but not in embryonic organs.

Its subcellular location is the cytoplasm. It is found in the nucleus. It catalyses the reaction Fe(III)-heme b-[protein] + nitric oxide + H2O = Fe(II)-heme b-[protein] + nitrite + 2 H(+). In terms of biological role, phytoglobin that reduces nitrite to nitric oxide (NO) under anoxic conditions (e.g. during flooding or in waterlogged soil). May not function as an oxygen storage or transport protein. Has an unusually high affinity for O(2) through an hexacoordinate heme iron because of a very low dissociation constant. The polypeptide is Anaerobic nitrite reductase GLB1 (HB) (Zea mays subsp. parviglumis (Balsas teosinte)).